A 111-amino-acid polypeptide reads, in one-letter code: Beta-microseminoprotein (111 aa).

The signal sequence occupies residues 1-20 (MKFLLGTLVVLATFVTLCNS). Position 21 is a pyrrolidone carboxylic acid (glutamine 21). Cystine bridges form between cysteine 22-cysteine 67, cysteine 35-cysteine 59, cysteine 54-cysteine 90, cysteine 57-cysteine 66, and cysteine 81-cysteine 104.

Belongs to the beta-microseminoprotein family. As to quaternary structure, homodimer; Interacts with PI16. Corpora lutea, mostly in the luteal cells surrounding blood vessels.

The protein localises to the secreted. This is Beta-microseminoprotein (MSMB) from Sus scrofa (Pig).